The sequence spans 81 residues: MAGRKKAADFEQQLARLQEIVDALEGGDLPLEKSVALYKEGLGLARASREQLAKARNEIRLFTEGEVRDFDPEEGDDGDDR.

Belongs to the XseB family. In terms of assembly, heterooligomer composed of large and small subunits.

It localises to the cytoplasm. It carries out the reaction Exonucleolytic cleavage in either 5'- to 3'- or 3'- to 5'-direction to yield nucleoside 5'-phosphates.. Functionally, bidirectionally degrades single-stranded DNA into large acid-insoluble oligonucleotides, which are then degraded further into small acid-soluble oligonucleotides. This chain is Exodeoxyribonuclease 7 small subunit, found in Nitratidesulfovibrio vulgaris (strain ATCC 29579 / DSM 644 / CCUG 34227 / NCIMB 8303 / VKM B-1760 / Hildenborough) (Desulfovibrio vulgaris).